A 617-amino-acid chain; its full sequence is Vacuolar protein sorting-associated protein 33B (617 aa).

An N-acetylalanine modification is found at A2.

It belongs to the STXBP/unc-18/SEC1 family. Interacts with RAB11A and VIPAS39. Interacts with RAB25. Associates with adapter protein complex 3 (AP-3), clathrin:AP-3 and clathrin:HGS complexes. In terms of assembly, (Microbial infection) Interacts with M.tuberculosis PtpA. Post-translationally, phosphorylated on tyrosine residues. (Microbial infection) Dephosphorylated by M.tuberculosis PtpA, which induces the reduction of host phagolysosome fusion in M.tuberculosis-infected macrophages. As to expression, ubiquitous; highly expressed in testis and low expression in the lung.

It localises to the late endosome membrane. The protein resides in the lysosome membrane. The protein localises to the early endosome. Its subcellular location is the cytoplasmic vesicle. It is found in the clathrin-coated vesicle. It localises to the recycling endosome. Functionally, may play a role in vesicle-mediated protein trafficking to lysosomal compartments and in membrane docking/fusion reactions of late endosomes/lysosomes. Required for proper trafficking and targeting of the collagen-modifying enzyme lysyl hydroxylase 3 (LH3) to intracellular collagen. Mediates phagolysosomal fusion in macrophages. Proposed to be involved in endosomal maturation implicating VIPAS39. In epithelial cells, the VPS33B:VIPAS39 complex may play a role in the apical recycling pathway and in the maintenance of the apical-basolateral polarity. Seems to be involved in the sorting of specific cargos from the trans-Golgi network to alpha-granule-destined multivesicular bodies (MVBs) promoting MVBs maturation in megakaryocytes. This chain is Vacuolar protein sorting-associated protein 33B (VPS33B), found in Homo sapiens (Human).